The primary structure comprises 358 residues: Peroxidase 54 (358 aa).

A signal peptide spans 1 to 31 (MAVTSSSSTCDGFFIISLIVIVSSLFGTSSA). At Gln32 the chain carries Pyrrolidone carboxylic acid. Residues Asn34 and Asn44 are each glycosylated (N-linked (GlcNAc...) asparagine). 4 disulfides stabilise this stretch: Cys42-Cys122, Cys75-Cys80, Cys128-Cys330, and Cys207-Cys239. The Proton acceptor role is filled by His73. The Ca(2+) site is built by Asp74, Val77, Gly79, Asp81, and Ser83. N-linked (GlcNAc...) asparagine glycosylation is found at Asn103, Asn161, and Asn166. Residue Pro170 participates in substrate binding. N-linked (GlcNAc...) asparagine glycosylation occurs at Asn178. His200 provides a ligand contact to heme b. A Ca(2+)-binding site is contributed by Thr201. Residues Asn218, Asn228, and Asn242 are each glycosylated (N-linked (GlcNAc...) asparagine). Residues Asp252, Thr255, and Asp260 each coordinate Ca(2+). Asn298 is a glycosylation site (N-linked (GlcNAc...) asparagine).

Belongs to the peroxidase family. Classical plant (class III) peroxidase subfamily. Heme b is required as a cofactor. The cofactor is Ca(2+).

The protein resides in the secreted. It localises to the vacuole. The enzyme catalyses 2 a phenolic donor + H2O2 = 2 a phenolic radical donor + 2 H2O. Functionally, removal of H(2)O(2), oxidation of toxic reductants, biosynthesis and degradation of lignin, suberization, auxin catabolism, response to environmental stresses such as wounding, pathogen attack and oxidative stress. These functions might be dependent on each isozyme/isoform in each plant tissue. The polypeptide is Peroxidase 54 (PER54) (Arabidopsis thaliana (Mouse-ear cress)).